Here is a 96-residue protein sequence, read N- to C-terminus: UPF0235 protein YggU (96 aa).

It belongs to the UPF0235 family.

This chain is UPF0235 protein YggU, found in Salmonella typhi.